A 252-amino-acid chain; its full sequence is MYQRTATQLARKPASKQGETEMNNSIQDLKQVEDYYGTTRRFGDSDATIYEIWEQGGAFNDSITPSTYSQEYRSHLGLKLKSLTEEGAIIFSIGCGNGFVEGDLVQAKRRVLAIDFNDEAVALSRKKGVDAYTADFFELEPGALAGVKSIYADGLLGHLFHPELELKPTFEKLKELNLESGTTLVFSNDSPRDPEALFAAHDKVDGFWFISRDYLRDALTEAGFKIEESYYFPYTRPISGLRNRTLCVALVP.

The disordered stretch occupies residues 1–23 (MYQRTATQLARKPASKQGETEMN).

In terms of biological role, may play a role in tabtoxin biosynthesis. This chain is Tabtoxin biosynthesis enzyme (tblA), found in Pseudomonas amygdali pv. tabaci (Pseudomonas syringae pv. tabaci).